The primary structure comprises 88 residues: Sec-independent protein translocase protein TatA (88 aa).

Residues 3 to 23 (IFGVGLPEVTVILILALLIFG) form a helical membrane-spanning segment. The interval 56-88 (MNEQDKDESPISIESNQTNEINQEKIDSENSKK) is disordered. The segment covering 67–76 (SIESNQTNEI) has biased composition (polar residues). A compositionally biased stretch (basic and acidic residues) spans 77-88 (NQEKIDSENSKK).

Belongs to the TatA/E family. In terms of assembly, forms a complex with TatC.

The protein localises to the cell inner membrane. In terms of biological role, part of the twin-arginine translocation (Tat) system that transports large folded proteins containing a characteristic twin-arginine motif in their signal peptide across membranes. TatA could form the protein-conducting channel of the Tat system. The protein is Sec-independent protein translocase protein TatA of Prochlorococcus marinus (strain AS9601).